Here is a 122-residue protein sequence, read N- to C-terminus: Large ribosomal subunit protein uL18 (122 aa).

Belongs to the universal ribosomal protein uL18 family. Part of the 50S ribosomal subunit; part of the 5S rRNA/L5/L18/L25 subcomplex. Contacts the 5S and 23S rRNAs.

Its function is as follows. This is one of the proteins that bind and probably mediate the attachment of the 5S RNA into the large ribosomal subunit, where it forms part of the central protuberance. The polypeptide is Large ribosomal subunit protein uL18 (Prochlorococcus marinus (strain MIT 9215)).